A 302-amino-acid chain; its full sequence is Methionyl-tRNA formyltransferase (302 aa).

Residue 109–112 coordinates (6S)-5,6,7,8-tetrahydrofolate; sequence SILP.

This sequence belongs to the Fmt family.

The enzyme catalyses L-methionyl-tRNA(fMet) + (6R)-10-formyltetrahydrofolate = N-formyl-L-methionyl-tRNA(fMet) + (6S)-5,6,7,8-tetrahydrofolate + H(+). Its function is as follows. Attaches a formyl group to the free amino group of methionyl-tRNA(fMet). The formyl group appears to play a dual role in the initiator identity of N-formylmethionyl-tRNA by promoting its recognition by IF2 and preventing the misappropriation of this tRNA by the elongation apparatus. In Campylobacter hominis (strain ATCC BAA-381 / DSM 21671 / CCUG 45161 / LMG 19568 / NCTC 13146 / CH001A), this protein is Methionyl-tRNA formyltransferase.